Consider the following 550-residue polypeptide: Lariat debranching enzyme (550 aa).

Positions 8 and 10 each coordinate a divalent metal cation. A Phosphoserine modification is found at serine 28. Aspartate 39 and asparagine 84 together coordinate a divalent metal cation. The interval 124 to 154 (SGIFKSHDYRKGHFECPPYNSSTIRSIYHVR) is lariat recognition loop. Position 128 is an N6-acetyllysine (lysine 128). A divalent metal cation is bound by residues histidine 174, histidine 226, and histidine 228. Residues 390-550 (EHHQCGEYEQ…AVDDGDASAE (161 aa)) are disordered. Residues 416–426 (NTDTSALSSIN) are compositionally biased toward polar residues. The segment covering 430 to 445 (IMLDEEEEEEEEEEEA) has biased composition (acidic residues). Residues 450 to 483 (SDMNTPSVEPASDQASDLSTSFSDIRNLPSSMFV) show a composition bias toward polar residues. Serine 470, serine 480, serine 484, serine 485, serine 489, serine 491, serine 494, serine 505, and serine 520 each carry phosphoserine. The span at 498–528 (KCGETVESGDEKDLAKFPLKRLSDEHEPEQR) shows a compositional bias: basic and acidic residues.

This sequence belongs to the lariat debranching enzyme family. The cofactor is Fe(2+). Zn(2+) is required as a cofactor. It depends on Mn(2+) as a cofactor.

It is found in the nucleus. With respect to regulation, active in presence of diverse metals including Fe(2+), Zn(2+), Mn(2+). Also activated by Ca(2+). Binds two metal cations in two adjacent alpha and beta metal-binding pockets. Its function is as follows. Cleaves the 2'-5' phosphodiester linkage at the branch point of excised lariat intron RNA and converts them into linear molecules that can be subsequently degraded, thereby facilitating ribonucleotide turnover. Linked to its role in pre-mRNA processing mechanism, may also participate in retrovirus replication and have an antiviral cell-intrinsic defense function. This is Lariat debranching enzyme (Dbr1) from Mus musculus (Mouse).